Reading from the N-terminus, the 658-residue chain is Heat shock 70 kDa protein, mitochondrial (658 aa).

The tract at residues 629-658 is disordered; it reads KLDSSASKSSSTENKENKDNTTEAEFTEKK. Low complexity predominate over residues 631–640; sequence DSSASKSSST. Over residues 641 to 658 the composition is skewed to basic and acidic residues; the sequence is ENKENKDNTTEAEFTEKK.

The protein belongs to the heat shock protein 70 family.

Its subcellular location is the mitochondrion. In terms of biological role, may function in protein folding and assembly, and disassembly of protein complexes. The polypeptide is Heat shock 70 kDa protein, mitochondrial (mhsp70) (Dictyostelium discoideum (Social amoeba)).